A 198-amino-acid chain; its full sequence is Ribonuclease HII (198 aa).

The region spanning 10–198 is the RNase H type-2 domain; the sequence is HLVAGVDEVG…PVKRALELAS (189 aa). A divalent metal cation is bound by residues aspartate 16, glutamate 17, and aspartate 108.

Belongs to the RNase HII family. Mn(2+) is required as a cofactor. It depends on Mg(2+) as a cofactor.

It is found in the cytoplasm. It carries out the reaction Endonucleolytic cleavage to 5'-phosphomonoester.. Its function is as follows. Endonuclease that specifically degrades the RNA of RNA-DNA hybrids. The protein is Ribonuclease HII of Salmonella arizonae (strain ATCC BAA-731 / CDC346-86 / RSK2980).